Consider the following 353-residue polypeptide: Photosystem II D2 protein (353 aa).

Threonine 2 is modified (N-acetylthreonine). Phosphothreonine is present on threonine 2. Residues 41 to 61 traverse the membrane as a helical segment; the sequence is CAYFALGGWFTGTTFVTSWYT. Histidine 118 provides a ligand contact to chlorophyll a. A helical transmembrane segment spans residues 125–141; sequence GFMLRQFELARSVQLRP. Pheophytin a is bound by residues glutamine 130 and asparagine 143. Residues 153–166 form a helical membrane-spanning segment; it reads VFVSVFLIYPLGQS. Histidine 198 is a chlorophyll a binding site. The chain crosses the membrane as a helical span at residues 208 to 228; the sequence is AALLCAIHGATVENTLFEDGD. A plastoquinone-binding residues include histidine 215 and phenylalanine 262. A Fe cation-binding site is contributed by histidine 215. Residue histidine 269 coordinates Fe cation. Residues 279-295 form a helical membrane-spanning segment; the sequence is GLWMSAIGVVGLALNLR.

It belongs to the reaction center PufL/M/PsbA/D family. PSII is composed of 1 copy each of membrane proteins PsbA, PsbB, PsbC, PsbD, PsbE, PsbF, PsbH, PsbI, PsbJ, PsbK, PsbL, PsbM, PsbT, PsbX, PsbY, PsbZ, Psb30/Ycf12, at least 3 peripheral proteins of the oxygen-evolving complex and a large number of cofactors. It forms dimeric complexes. The cofactor is The D1/D2 heterodimer binds P680, chlorophylls that are the primary electron donor of PSII, and subsequent electron acceptors. It shares a non-heme iron and each subunit binds pheophytin, quinone, additional chlorophylls, carotenoids and lipids. There is also a Cl(-1) ion associated with D1 and D2, which is required for oxygen evolution. The PSII complex binds additional chlorophylls, carotenoids and specific lipids..

The protein resides in the plastid. It is found in the chloroplast thylakoid membrane. The enzyme catalyses 2 a plastoquinone + 4 hnu + 2 H2O = 2 a plastoquinol + O2. Functionally, photosystem II (PSII) is a light-driven water:plastoquinone oxidoreductase that uses light energy to abstract electrons from H(2)O, generating O(2) and a proton gradient subsequently used for ATP formation. It consists of a core antenna complex that captures photons, and an electron transfer chain that converts photonic excitation into a charge separation. The D1/D2 (PsbA/PsbD) reaction center heterodimer binds P680, the primary electron donor of PSII as well as several subsequent electron acceptors. D2 is needed for assembly of a stable PSII complex. The chain is Photosystem II D2 protein from Lolium perenne (Perennial ryegrass).